The following is a 483-amino-acid chain: Regulatory protein ViaA (483 aa).

Belongs to the ViaA family. In terms of assembly, homodimer. Interacts with RavA.

It is found in the cytoplasm. In terms of biological role, component of the RavA-ViaA chaperone complex, which may act on the membrane to optimize the function of some of the respiratory chains. ViaA stimulates the ATPase activity of RavA. This chain is Regulatory protein ViaA, found in Salmonella paratyphi A (strain ATCC 9150 / SARB42).